The sequence spans 242 residues: NAD(P)H-quinone oxidoreductase subunit K (242 aa).

Positions 59, 60, 124, and 155 each coordinate [4Fe-4S] cluster.

The protein belongs to the complex I 20 kDa subunit family. NDH-1 can be composed of about 15 different subunits; different subcomplexes with different compositions have been identified which probably have different functions. Requires [4Fe-4S] cluster as cofactor.

The protein resides in the cellular thylakoid membrane. It carries out the reaction a plastoquinone + NADH + (n+1) H(+)(in) = a plastoquinol + NAD(+) + n H(+)(out). The enzyme catalyses a plastoquinone + NADPH + (n+1) H(+)(in) = a plastoquinol + NADP(+) + n H(+)(out). In terms of biological role, NDH-1 shuttles electrons from an unknown electron donor, via FMN and iron-sulfur (Fe-S) centers, to quinones in the respiratory and/or the photosynthetic chain. The immediate electron acceptor for the enzyme in this species is believed to be plastoquinone. Couples the redox reaction to proton translocation, and thus conserves the redox energy in a proton gradient. Cyanobacterial NDH-1 also plays a role in inorganic carbon-concentration. The sequence is that of NAD(P)H-quinone oxidoreductase subunit K from Synechococcus sp. (strain RCC307).